Here is a 245-residue protein sequence, read N- to C-terminus: tRNA pseudouridine synthase A (245 aa).

Aspartate 52 functions as the Nucleophile in the catalytic mechanism. Position 110 (tyrosine 110) interacts with substrate.

This sequence belongs to the tRNA pseudouridine synthase TruA family. In terms of assembly, homodimer.

It catalyses the reaction uridine(38/39/40) in tRNA = pseudouridine(38/39/40) in tRNA. Its function is as follows. Formation of pseudouridine at positions 38, 39 and 40 in the anticodon stem and loop of transfer RNAs. This is tRNA pseudouridine synthase A from Borrelia hermsii (strain HS1 / DAH).